A 209-amino-acid chain; its full sequence is uncharacterized protein (209 aa).

The next 3 membrane-spanning stretches (helical) occupy residues 26 to 48 (LRYFIPYPAELLLFAIPLVGLAV), 147 to 169 (AYLVYLPAFFFALLVYFLYPFLM), and 179 to 196 (IVAAVLGIAAFFAGVYLL).

It localises to the cell membrane. This is an uncharacterized protein from Archaeoglobus fulgidus (strain ATCC 49558 / DSM 4304 / JCM 9628 / NBRC 100126 / VC-16).